The following is a 212-amino-acid chain: Large ribosomal subunit protein uL3 (212 aa).

The segment at 135–161 is disordered; sequence MTHGNSLSHRAPGSIGQNQSPGKVFKG. At Gln-153 the chain carries N5-methylglutamine.

The protein belongs to the universal ribosomal protein uL3 family. As to quaternary structure, part of the 50S ribosomal subunit. Forms a cluster with proteins L14 and L19. In terms of processing, methylated by PrmB.

Functionally, one of the primary rRNA binding proteins, it binds directly near the 3'-end of the 23S rRNA, where it nucleates assembly of the 50S subunit. The polypeptide is Large ribosomal subunit protein uL3 (Alteromonas mediterranea (strain DSM 17117 / CIP 110805 / LMG 28347 / Deep ecotype)).